Reading from the N-terminus, the 139-residue chain is Ribonuclease P protein component (139 aa).

A disordered region spans residues 116 to 139 (FSKNKSTIGGEYSPKNEQCESELP).

The protein belongs to the RnpA family. Consists of a catalytic RNA component (M1 or rnpB) and a protein subunit.

It catalyses the reaction Endonucleolytic cleavage of RNA, removing 5'-extranucleotides from tRNA precursor.. Its function is as follows. RNaseP catalyzes the removal of the 5'-leader sequence from pre-tRNA to produce the mature 5'-terminus. It can also cleave other RNA substrates such as 4.5S RNA. The protein component plays an auxiliary but essential role in vivo by binding to the 5'-leader sequence and broadening the substrate specificity of the ribozyme. This chain is Ribonuclease P protein component, found in Chlamydia abortus (strain DSM 27085 / S26/3) (Chlamydophila abortus).